The sequence spans 156 residues: Phosphopantetheine adenylyltransferase (156 aa).

Thr9 is a binding site for substrate. Residues 9-10 (TF) and His17 contribute to the ATP site. Substrate-binding residues include Lys41, Leu73, and Arg87. ATP-binding positions include 88–90 (GVR), Glu98, and 123–129 (WAFVSST).

Belongs to the bacterial CoaD family. As to quaternary structure, homohexamer. The cofactor is Mg(2+).

The protein resides in the cytoplasm. It catalyses the reaction (R)-4'-phosphopantetheine + ATP + H(+) = 3'-dephospho-CoA + diphosphate. The protein operates within cofactor biosynthesis; coenzyme A biosynthesis; CoA from (R)-pantothenate: step 4/5. Functionally, reversibly transfers an adenylyl group from ATP to 4'-phosphopantetheine, yielding dephospho-CoA (dPCoA) and pyrophosphate. The polypeptide is Phosphopantetheine adenylyltransferase (Haemophilus influenzae (strain ATCC 51907 / DSM 11121 / KW20 / Rd)).